We begin with the raw amino-acid sequence, 501 residues long: Cytochrome P450 71B25 (501 aa).

The chain crosses the membrane as a helical span at residues Met-1–Tyr-21. Cys-445 provides a ligand contact to heme.

It belongs to the cytochrome P450 family. Heme is required as a cofactor.

The protein localises to the membrane. The chain is Cytochrome P450 71B25 (CYP71B25) from Arabidopsis thaliana (Mouse-ear cress).